The following is a 46-amino-acid chain: Iota-conotoxin-like Fi11.8 (46 aa).

Residues Pro2 and Pro11 each carry the 4-hydroxyproline modification. Disulfide bonds link Cys5–Cys19, Cys12–Cys22, Cys18–Cys27, and Cys21–Cys38. At Pro29 the chain carries 4-hydroxyproline. Position 33 is a 6'-bromotryptophan (Trp33). Phe44 carries the post-translational modification D-phenylalanine.

The protein belongs to the conotoxin I1 superfamily. As to expression, expressed by the venom duct.

It is found in the secreted. In terms of biological role, iota-conotoxins bind to voltage-gated sodium channels (Nav) and act as agonists by shifting the voltage-dependence of activation to more hyperpolarized levels. Produces general excitatory symptoms. The polypeptide is Iota-conotoxin-like Fi11.8 (Conus figulinus (Fig cone)).